Consider the following 387-residue polypeptide: 4-hydroxy-3-methylbut-2-en-1-yl diphosphate synthase (flavodoxin) (387 aa).

Positions 280, 283, 315, and 322 each coordinate [4Fe-4S] cluster.

Belongs to the IspG family. [4Fe-4S] cluster serves as cofactor.

It catalyses the reaction (2E)-4-hydroxy-3-methylbut-2-enyl diphosphate + oxidized [flavodoxin] + H2O + 2 H(+) = 2-C-methyl-D-erythritol 2,4-cyclic diphosphate + reduced [flavodoxin]. The protein operates within isoprenoid biosynthesis; isopentenyl diphosphate biosynthesis via DXP pathway; isopentenyl diphosphate from 1-deoxy-D-xylulose 5-phosphate: step 5/6. Converts 2C-methyl-D-erythritol 2,4-cyclodiphosphate (ME-2,4cPP) into 1-hydroxy-2-methyl-2-(E)-butenyl 4-diphosphate. The polypeptide is 4-hydroxy-3-methylbut-2-en-1-yl diphosphate synthase (flavodoxin) (Mycobacterium bovis (strain ATCC BAA-935 / AF2122/97)).